Consider the following 315-residue polypeptide: Lipoyl synthase (315 aa).

The interval 1–33 is disordered; the sequence is MADMPPVLRHPEKAHRPDQPQPKKPDWIRVKAP. The span at 9 to 29 shows a compositional bias: basic and acidic residues; that stretch reads RHPEKAHRPDQPQPKKPDWIR. The [4Fe-4S] cluster site is built by Cys54, Cys59, Cys65, Cys80, Cys84, Cys87, and Ser294. One can recognise a Radical SAM core domain in the interval 66 to 283; sequence WSQGHATMMI…EKAAYGKGFL (218 aa).

The protein belongs to the radical SAM superfamily. Lipoyl synthase family. The cofactor is [4Fe-4S] cluster.

The protein resides in the cytoplasm. The catalysed reaction is [[Fe-S] cluster scaffold protein carrying a second [4Fe-4S](2+) cluster] + N(6)-octanoyl-L-lysyl-[protein] + 2 oxidized [2Fe-2S]-[ferredoxin] + 2 S-adenosyl-L-methionine + 4 H(+) = [[Fe-S] cluster scaffold protein] + N(6)-[(R)-dihydrolipoyl]-L-lysyl-[protein] + 4 Fe(3+) + 2 hydrogen sulfide + 2 5'-deoxyadenosine + 2 L-methionine + 2 reduced [2Fe-2S]-[ferredoxin]. The protein operates within protein modification; protein lipoylation via endogenous pathway; protein N(6)-(lipoyl)lysine from octanoyl-[acyl-carrier-protein]: step 2/2. Functionally, catalyzes the radical-mediated insertion of two sulfur atoms into the C-6 and C-8 positions of the octanoyl moiety bound to the lipoyl domains of lipoate-dependent enzymes, thereby converting the octanoylated domains into lipoylated derivatives. The sequence is that of Lipoyl synthase from Paracoccus denitrificans (strain Pd 1222).